We begin with the raw amino-acid sequence, 419 residues long: Transcription termination factor Rho (419 aa).

In terms of domain architecture, Rho RNA-BD spans 48–123 (DIFGDGVLEI…LKVNEVNFDK (76 aa)). RNA-binding regions lie at residues 61–66 (GFGFLR), 78–80 (DIY), and 108–110 (ERY). ATP is bound by residues 169 to 174 (GRGQRG), 181 to 186 (KAGKTM), and Arg212. The segment at 284 to 288 (VLTGG) is RNA-binding 2.

The protein belongs to the Rho family. In terms of assembly, homohexamer. The homohexamer assembles into an open ring structure.

In terms of biological role, facilitates transcription termination by a mechanism that involves Rho binding to the nascent RNA, activation of Rho's RNA-dependent ATPase activity, and release of the mRNA from the DNA template. The polypeptide is Transcription termination factor Rho (Escherichia coli O157:H7).